Here is a 196-residue protein sequence, read N- to C-terminus: Nucleoside triphosphate pyrophosphatase (196 aa).

The Proton acceptor role is filled by Asp-70.

Belongs to the Maf family. A divalent metal cation is required as a cofactor.

It localises to the cytoplasm. It carries out the reaction a ribonucleoside 5'-triphosphate + H2O = a ribonucleoside 5'-phosphate + diphosphate + H(+). It catalyses the reaction a 2'-deoxyribonucleoside 5'-triphosphate + H2O = a 2'-deoxyribonucleoside 5'-phosphate + diphosphate + H(+). In terms of biological role, nucleoside triphosphate pyrophosphatase. May have a dual role in cell division arrest and in preventing the incorporation of modified nucleotides into cellular nucleic acids. In Gloeothece citriformis (strain PCC 7424) (Cyanothece sp. (strain PCC 7424)), this protein is Nucleoside triphosphate pyrophosphatase.